Here is a 254-residue protein sequence, read N- to C-terminus: tRNA (guanine-N(7)-)-methyltransferase (254 aa).

Basic and acidic residues predominate over residues 1-11 (MSISDNSREEL). Residues 1–25 (MSISDNSREELGELPAGRPLQSEFN) form a disordered region. Residues glutamate 83, glutamate 108, aspartate 135, and aspartate 158 each contribute to the S-adenosyl-L-methionine site. Residue aspartate 158 is part of the active site. Lysine 162 is a substrate binding site. Positions 164-169 (RHNKRR) are interaction with RNA. Substrate contacts are provided by residues aspartate 194 and 232 to 235 (TKFE).

The protein belongs to the class I-like SAM-binding methyltransferase superfamily. TrmB family.

It catalyses the reaction guanosine(46) in tRNA + S-adenosyl-L-methionine = N(7)-methylguanosine(46) in tRNA + S-adenosyl-L-homocysteine. It participates in tRNA modification; N(7)-methylguanine-tRNA biosynthesis. In terms of biological role, catalyzes the formation of N(7)-methylguanine at position 46 (m7G46) in tRNA. The polypeptide is tRNA (guanine-N(7)-)-methyltransferase (Corynebacterium efficiens (strain DSM 44549 / YS-314 / AJ 12310 / JCM 11189 / NBRC 100395)).